The following is a 456-amino-acid chain: uncharacterized protein (456 aa).

Residues 415 to 428 (SNSNGSSSSGNSSS) are compositionally biased toward low complexity. The tract at residues 415 to 444 (SNSNGSSSSGNSSSIYNSHLMNDKKKNNNA) is disordered.

This is an uncharacterized protein from Saccharomyces cerevisiae (strain ATCC 204508 / S288c) (Baker's yeast).